The primary structure comprises 870 residues: Leucine--tRNA ligase (870 aa).

Positions 36–46 (PYPSGKIHLGH) match the 'HIGH' region motif. The 'KMSKS' region motif lies at 602–606 (KMSKS). Lys-605 contacts ATP.

The protein belongs to the class-I aminoacyl-tRNA synthetase family.

It is found in the cytoplasm. It carries out the reaction tRNA(Leu) + L-leucine + ATP = L-leucyl-tRNA(Leu) + AMP + diphosphate. This chain is Leucine--tRNA ligase, found in Rickettsia akari (strain Hartford).